We begin with the raw amino-acid sequence, 319 residues long: Ankyrin repeat domain-containing protein 1 (319 aa).

Positions 61 to 89 form a coiled coil; sequence KTEKQREAELKKKKLEQRSKLENLEDLEI. 5 ANK repeats span residues 152-181, 185-214, 218-247, 251-280, and 284-315; these read YKRTALHRACLEGHLAIVEKLIEAGAQIEF, LESTAIHWASRGGSLDVLKLLLNKGAKISA, LLSTPLHVAVRTGHYECAEHLIACEADLNA, EGDTPLHDAVRLNRYKMIRLLITYGADLNV, and AGKTPMDLVLHWQNGTKAIFDSLKENSYKASR.

Interacts with TTN/titin and YBX1.

Its subcellular location is the nucleus. In terms of biological role, may play an important role in endothelial cell activation. May act as a nuclear transcription factor that negatively regulates the expression of cardiac genes. The chain is Ankyrin repeat domain-containing protein 1 (ANKRD1) from Bos taurus (Bovine).